Consider the following 125-residue polypeptide: MKRNNNLIIPLLKIKKLLKRKGCKRIQNSALVFFSKVLQYLIEELLEISMNVSILNKTKKYRIKPKDISWSIQSDPEFNLLFRNIIIPSSGRISNKLNRIIQRSFKFKSFKFDDYEKSDYSSKTF.

The protein belongs to the histone H2A family. The nucleosome is a histone octamer containing two molecules each of H2A, H2B, H3 and H4 assembled in one H3-H4 heterotetramer and two H2A-H2B heterodimers. The octamer wraps approximately 147 bp of DNA.

Its subcellular location is the nucleus. The protein localises to the chromosome. Core component of nucleosome which plays a central role in DNA double strand break (DSB) repair. Nucleosomes wrap and compact DNA into chromatin, limiting DNA accessibility to the cellular machineries which require DNA as a template. Histones thereby play a central role in transcription regulation, DNA repair, DNA replication and chromosomal stability. DNA accessibility is regulated via a complex set of post-translational modifications of histones, also called histone code, and nucleosome remodeling. The sequence is that of Histone H2A.v3 (H2Av3) from Dictyostelium discoideum (Social amoeba).